Reading from the N-terminus, the 467-residue chain is Probable lipase C1672.09 (467 aa).

Over 1–17 (MIQLPFIQRLKWEEYMA) the chain is Cytoplasmic. A helical; Signal-anchor for type II membrane protein membrane pass occupies residues 18-38 (LFLGFFFVIFEKLLSCLAFMI). The Lumenal portion of the chain corresponds to 39–467 (HNTLGLFYRS…NHIAPRNKPI (429 aa)). A Phosphoserine modification is found at Ser-66. Residues 127–421 (PVVYCHHGLL…SYEHLDMIWA (295 aa)) form the AB hydrolase-1 domain. Residue Ser-222 is the Nucleophile of the active site. 2 N-linked (GlcNAc...) asparagine glycosylation sites follow: Asn-311 and Asn-316. Catalysis depends on charge relay system residues Asp-389 and His-415. The segment covering 440–457 (HHPPEHEENDKENREIQK) has biased composition (basic and acidic residues). The disordered stretch occupies residues 440 to 467 (HHPPEHEENDKENREIQKNHIAPRNKPI).

The protein belongs to the AB hydrolase superfamily. Lipase family.

It is found in the cytoplasm. The protein localises to the membrane. In terms of biological role, probable lipase. The protein is Probable lipase C1672.09 of Schizosaccharomyces pombe (strain 972 / ATCC 24843) (Fission yeast).